A 536-amino-acid polypeptide reads, in one-letter code: Probable tyrosyl-DNA phosphodiesterase (536 aa).

The active-site Nucleophile is His122. A substrate-binding site is contributed by Lys124. Residues Ser315 to Ser318 form an interaction with DNA region. His401 acts as the Proton donor/acceptor in catalysis. Lys403 contributes to the substrate binding site.

Belongs to the tyrosyl-DNA phosphodiesterase family.

It localises to the nucleus. DNA repair enzyme that can remove a variety of covalent adducts from DNA through hydrolysis of a 3'-phosphodiester bond, giving rise to DNA with a free 3' phosphate. Catalyzes the hydrolysis of dead-end complexes between DNA and the topoisomerase I active site tyrosine residue. Hydrolyzes 3'-phosphoglycolates on protruding 3' ends on DNA double-strand breaks due to DNA damage by radiation and free radicals. Acts on blunt-ended double-strand DNA breaks and on single-stranded DNA. May have low 3'exonuclease activity and may be able to remove a single nucleoside from the 3'end of DNA and RNA molecules with 3'hydroxyl groups. Has no exonuclease activity towards DNA or RNA with a 3'phosphate. The chain is Probable tyrosyl-DNA phosphodiesterase from Schizosaccharomyces pombe (strain 972 / ATCC 24843) (Fission yeast).